Reading from the N-terminus, the 187-residue chain is Adenine phosphoribosyltransferase (187 aa).

The protein belongs to the purine/pyrimidine phosphoribosyltransferase family. As to quaternary structure, homodimer.

It localises to the cytoplasm. It catalyses the reaction AMP + diphosphate = 5-phospho-alpha-D-ribose 1-diphosphate + adenine. The protein operates within purine metabolism; AMP biosynthesis via salvage pathway; AMP from adenine: step 1/1. In terms of biological role, catalyzes a salvage reaction resulting in the formation of AMP, that is energically less costly than de novo synthesis. The chain is Adenine phosphoribosyltransferase from Yersinia pseudotuberculosis serotype I (strain IP32953).